A 308-amino-acid chain; its full sequence is uncharacterized protein (308 aa).

A helical membrane pass occupies residues 191–211 (YLCLNLPYIIVALTLVPYSLV).

It localises to the host membrane. This is an uncharacterized protein from Saccharolobus islandicus (Sulfolobus islandicus).